Reading from the N-terminus, the 588-residue chain is Polyphenol oxidase II, chloroplastic (588 aa).

Residues 1–10 are compositionally biased toward polar residues; it reads MASFTTSPCT. The interval 1 to 32 is disordered; the sequence is MASFTTSPCTSAAPKTPKSLSSSATISSPLPK. Residues 1-50 constitute a chloroplast transit peptide; the sequence is MASFTTSPCTSAAPKTPKSLSSSATISSPLPKPSQIHIATAKRTHHFKVS. Over residues 16–29 the composition is skewed to low complexity; the sequence is TPKSLSSSATISSP. Residues 51 to 88 constitute a thylakoid transit peptide; sequence CNAPNGDSQPKLDRRDVLLGLGGLAGAASLINNPLAFA. Intrachain disulfides connect Cys-99–Cys-116 and Cys-115–Cys-179. Cu cation is bound by residues His-178, His-199, His-208, His-330, His-334, and His-366. The 2'-(S-cysteinyl)-histidine (Cys-His) cross-link spans 182-199; that stretch reads CNGGYVQTDYPDKEIQVH.

The protein belongs to the tyrosinase family. In terms of assembly, monomer. Cu(2+) is required as a cofactor.

The protein localises to the plastid. It is found in the chloroplast thylakoid lumen. It carries out the reaction 2 catechol + O2 = 2 1,2-benzoquinone + 2 H2O. Functionally, catalyzes the oxidation of mono- and o-diphenols to o-diquinones. The protein is Polyphenol oxidase II, chloroplastic (co-2) of Ipomoea batatas (Sweet potato).